The chain runs to 2197 residues: Protein Ycf2 (2197 aa).

1539–1546 (GSIGTGRS) contributes to the ATP binding site.

This sequence belongs to the Ycf2 family.

The protein localises to the plastid. The protein resides in the chloroplast stroma. Probable ATPase of unknown function. Its presence in a non-photosynthetic plant (Epifagus virginiana) and experiments in tobacco indicate that it has an essential function which is probably not related to photosynthesis. The sequence is that of Protein Ycf2 from Ipomoea purpurea (Common morning glory).